The primary structure comprises 146 residues: ATP synthase epsilon chain (146 aa).

The segment covering 92 to 116 (ISVDQARRDRDSLRKKLNEHERSEQ) has biased composition (basic and acidic residues). A disordered region spans residues 92-120 (ISVDQARRDRDSLRKKLNEHERSEQDPEV).

Belongs to the ATPase epsilon chain family. In terms of assembly, F-type ATPases have 2 components, CF(1) - the catalytic core - and CF(0) - the membrane proton channel. CF(1) has five subunits: alpha(3), beta(3), gamma(1), delta(1), epsilon(1). CF(0) has three main subunits: a, b and c.

The protein resides in the cell membrane. In terms of biological role, produces ATP from ADP in the presence of a proton gradient across the membrane. The chain is ATP synthase epsilon chain from Cutibacterium acnes (strain DSM 16379 / KPA171202) (Propionibacterium acnes).